Consider the following 376-residue polypeptide: Chaperone protein DnaJ (376 aa).

A J domain is found at 5 to 70 (DYYETLGVQK…EKRAAYDQYG (66 aa)). The segment at 133 to 211 (GTTKDIKINT…CHGDGRVHKK (79 aa)) adopts a CR-type zinc-finger fold. Residues Cys-146, Cys-149, Cys-163, Cys-166, Cys-185, Cys-188, Cys-199, and Cys-202 each coordinate Zn(2+). CXXCXGXG motif repeat units follow at residues 146–153 (CDHCDGSG), 163–170 (CPTCHGHG), 185–192 (CPTCQGSG), and 199–206 (CKHCHGDG).

This sequence belongs to the DnaJ family. In terms of assembly, homodimer. Zn(2+) is required as a cofactor.

The protein resides in the cytoplasm. Participates actively in the response to hyperosmotic and heat shock by preventing the aggregation of stress-denatured proteins and by disaggregating proteins, also in an autonomous, DnaK-independent fashion. Unfolded proteins bind initially to DnaJ; upon interaction with the DnaJ-bound protein, DnaK hydrolyzes its bound ATP, resulting in the formation of a stable complex. GrpE releases ADP from DnaK; ATP binding to DnaK triggers the release of the substrate protein, thus completing the reaction cycle. Several rounds of ATP-dependent interactions between DnaJ, DnaK and GrpE are required for fully efficient folding. Also involved, together with DnaK and GrpE, in the DNA replication of plasmids through activation of initiation proteins. This is Chaperone protein DnaJ from Mannheimia succiniciproducens (strain KCTC 0769BP / MBEL55E).